The sequence spans 481 residues: MQLYSSVCTHYPAGAPGPTAAAPAPPAAATPFKVSLQPPGAAGAAPEPETGECQPAAAAEHREAAAVPAAKMPAFSSCFEVVSGAAAPASAAAGPPGASCKPPLPPHYTSTAQITVRALGADRLLLHGPDPVPGAAGSAAAPRGRCLLLAPAPAAPVPPRRGSSAWLLEELLRPDCPEPAGLDATREGPDRNFRLSEHRQALAAAKHRGPAATPGSPDPGPGPWGEEHLAERGPRGWERGGDRCDAPGGDAARRPDPEAEAPPAGSIEAAPSSAAEPVIVSRSDPRDEKLALYLAEVEKQDKYLRQRNKYRFHIIPDGNCLYRAVSKTVYGDQSLHRELREQTVHYIADHLDHFSPLIEGDVGEFIIAAAQDGAWAGYPELLAMGQMLNVNIHLTTGGRLESPTVSTMIHYLGPEDSLRPSIWLSWLSNGHYDAVFDHSYPNPEYDNWCKQTQVQRKRDEELAKSMAISLSKMYIEQNACS.

Disordered stretches follow at residues 18-60 (PTAA…AAAE) and 202-282 (LAAA…IVSR). The span at 38-58 (PPGAAGAAPEPETGECQPAAA) shows a compositional bias: low complexity. Residues 225–257 (GEEHLAERGPRGWERGGDRCDAPGGDAARRPDP) show a composition bias toward basic and acidic residues. Positions 261 to 281 (APPAGSIEAAPSSAAEPVIVS) are enriched in low complexity. The region spanning 309-438 (KYRFHIIPDG…NGHYDAVFDH (130 aa)) is the OTU domain. The tract at residues 314-320 (IIPDGNC) is cys-loop. D317 is an active-site residue. Residue C320 is the Nucleophile of the active site. The tract at residues 369–379 (AAQDGAWAGYP) is his-loop. The interval 426–431 (WLSNGH) is variable-loop. H431 is an active-site residue. The region spanning 457-476 (KRDEELAKSMAISLSKMYIE) is the UIM domain.

It carries out the reaction Thiol-dependent hydrolysis of ester, thioester, amide, peptide and isopeptide bonds formed by the C-terminal Gly of ubiquitin (a 76-residue protein attached to proteins as an intracellular targeting signal).. Its function is as follows. Deubiquitinating enzyme that specifically hydrolyzes 'Lys-63'-linked polyubiquitin to monoubiquitin. Required for the stability and translation of a subset mRNAs with a high abundance of rare codons by mediating deubiquitination of 40S ribosomal protein RPS10/eS10, thereby antagonizing ZNF598-mediated 40S ubiquitination. The abundance of rare codons in mRNAs can limit the translation rate and can lead to ribosome collisions that trigger activation of ribosome quality control (RQC) pathway by ZNF598. OTUD1-mediated deubiquitination prevents activation of the RQC and subsequent dissociation of ribosomes and stimulates formation of polysomes and translation. This is OTU domain-containing protein 1 from Homo sapiens (Human).